Here is a 206-residue protein sequence, read N- to C-terminus: Small ribosomal subunit protein uS4 (206 aa).

Residues 96 to 156 (CRLDNVVYRM…EKSLGQLRIV (61 aa)) form the S4 RNA-binding domain.

This sequence belongs to the universal ribosomal protein uS4 family. As to quaternary structure, part of the 30S ribosomal subunit. Contacts protein S5. The interaction surface between S4 and S5 is involved in control of translational fidelity.

Its function is as follows. One of the primary rRNA binding proteins, it binds directly to 16S rRNA where it nucleates assembly of the body of the 30S subunit. Functionally, with S5 and S12 plays an important role in translational accuracy. In Pseudomonas putida (strain ATCC 47054 / DSM 6125 / CFBP 8728 / NCIMB 11950 / KT2440), this protein is Small ribosomal subunit protein uS4.